The sequence spans 539 residues: Membrane protein insertase YidC (539 aa).

A helical transmembrane segment spans residues 6-26 (VILAVALSFAVLLGWQFLFPP). Positions 28 to 63 (PQQPAPAQQEQTAQPNQAVDSSVAGPVSNQLPDPAS) are disordered. Over residues 32–45 (APAQQEQTAQPNQA) the composition is skewed to low complexity. The segment covering 54–63 (VSNQLPDPAS) has biased composition (polar residues). A run of 3 helical transmembrane segments spans residues 349-369 (YGIA…PLSH), 421-441 (MLLQ…TVAL), and 496-516 (IMMF…SGLV).

It belongs to the OXA1/ALB3/YidC family. Type 1 subfamily. Interacts with the Sec translocase complex via SecD. Specifically interacts with transmembrane segments of nascent integral membrane proteins during membrane integration.

It localises to the cell inner membrane. Its function is as follows. Required for the insertion and/or proper folding and/or complex formation of integral membrane proteins into the membrane. Involved in integration of membrane proteins that insert both dependently and independently of the Sec translocase complex, as well as at least some lipoproteins. Aids folding of multispanning membrane proteins. This chain is Membrane protein insertase YidC, found in Maridesulfovibrio salexigens (strain ATCC 14822 / DSM 2638 / NCIMB 8403 / VKM B-1763) (Desulfovibrio salexigens).